Consider the following 240-residue polypeptide: MNDLTITLKQAAKEMEFDLTENQTLAFEKYYNLLIEWNKNINLTAIIEPKEVALKHFIDSLTCLKILEIPCQANVLDIGTGAGFPGIPIKIFRPDINVTLMDSLNKRVNFLNEVIKKLGLTNICAIHDRAEDFGQKKEHREKYDYVLSRAVAKLKVLSEYCLPCTKLDGYFISQKGPDIDEEVKEASKAIEVLGGSLLNIHKLQLPFINDGRSLVVIKKVKQTPSVYPRKAGIPAKKPIA.

Residues Gly-79, Phe-84, 130–131 (AE), and Arg-149 each bind S-adenosyl-L-methionine.

The protein belongs to the methyltransferase superfamily. RNA methyltransferase RsmG family.

It localises to the cytoplasm. Specifically methylates the N7 position of a guanine in 16S rRNA. This Desulforamulus reducens (strain ATCC BAA-1160 / DSM 100696 / MI-1) (Desulfotomaculum reducens) protein is Ribosomal RNA small subunit methyltransferase G.